Reading from the N-terminus, the 300-residue chain is Ribonuclease HIII (300 aa).

The RNase H type-2 domain maps to 83–300; the sequence is IPIIGSDEVG…THKAQALLTK (218 aa). Residues Asp89, Glu90, and Asp194 each coordinate a divalent metal cation.

The protein belongs to the RNase HII family. RnhC subfamily. Mn(2+) serves as cofactor. Mg(2+) is required as a cofactor.

Its subcellular location is the cytoplasm. The enzyme catalyses Endonucleolytic cleavage to 5'-phosphomonoester.. Endonuclease that specifically degrades the RNA of RNA-DNA hybrids. The chain is Ribonuclease HIII from Streptococcus pyogenes serotype M3 (strain ATCC BAA-595 / MGAS315).